Consider the following 231-residue polypeptide: 5'-methylthioadenosine/S-adenosylhomocysteine nucleosidase (231 aa).

Catalysis depends on E12, which acts as the Proton acceptor. Residues G78, M153, and 174–175 each bind substrate; that span reads ME. The Proton donor role is filled by D198.

This sequence belongs to the PNP/UDP phosphorylase family. MtnN subfamily.

It carries out the reaction S-adenosyl-L-homocysteine + H2O = S-(5-deoxy-D-ribos-5-yl)-L-homocysteine + adenine. The catalysed reaction is S-methyl-5'-thioadenosine + H2O = 5-(methylsulfanyl)-D-ribose + adenine. It catalyses the reaction 5'-deoxyadenosine + H2O = 5-deoxy-D-ribose + adenine. It functions in the pathway amino-acid biosynthesis; L-methionine biosynthesis via salvage pathway; S-methyl-5-thio-alpha-D-ribose 1-phosphate from S-methyl-5'-thioadenosine (hydrolase route): step 1/2. Functionally, catalyzes the irreversible cleavage of the glycosidic bond in both 5'-methylthioadenosine (MTA) and S-adenosylhomocysteine (SAH/AdoHcy) to adenine and the corresponding thioribose, 5'-methylthioribose and S-ribosylhomocysteine, respectively. Also cleaves 5'-deoxyadenosine, a toxic by-product of radical S-adenosylmethionine (SAM) enzymes, into 5-deoxyribose and adenine. The sequence is that of 5'-methylthioadenosine/S-adenosylhomocysteine nucleosidase from Bacillus pumilus (strain SAFR-032).